We begin with the raw amino-acid sequence, 205 residues long: Cyanate hydratase (205 aa).

Active-site residues include arginine 133, glutamate 136, and serine 159.

Belongs to the cyanase family.

The catalysed reaction is cyanate + hydrogencarbonate + 3 H(+) = NH4(+) + 2 CO2. In terms of biological role, catalyzes the reaction of cyanate with bicarbonate to produce ammonia and carbon dioxide. This is Cyanate hydratase from Thalassiosira pseudonana (Marine diatom).